We begin with the raw amino-acid sequence, 329 residues long: Porphobilinogen deaminase (329 aa).

Cys-250 bears the S-(dipyrrolylmethanemethyl)cysteine mark.

This sequence belongs to the HMBS family. In terms of assembly, monomer. Dipyrromethane serves as cofactor.

It carries out the reaction 4 porphobilinogen + H2O = hydroxymethylbilane + 4 NH4(+). Its pathway is porphyrin-containing compound metabolism; protoporphyrin-IX biosynthesis; coproporphyrinogen-III from 5-aminolevulinate: step 2/4. Tetrapolymerization of the monopyrrole PBG into the hydroxymethylbilane pre-uroporphyrinogen in several discrete steps. This is Porphobilinogen deaminase from Burkholderia thailandensis (strain ATCC 700388 / DSM 13276 / CCUG 48851 / CIP 106301 / E264).